We begin with the raw amino-acid sequence, 213 residues long: Orotate phosphoribosyltransferase (213 aa).

Lys-26 serves as a coordination point for 5-phospho-alpha-D-ribose 1-diphosphate. Residue 34–35 (FF) coordinates orotate. 5-phospho-alpha-D-ribose 1-diphosphate is bound by residues 72 to 73 (YK), Arg-99, Lys-100, Lys-103, His-105, and 124 to 132 (DDVITAGTA). 2 residues coordinate orotate: Thr-128 and Arg-156.

This sequence belongs to the purine/pyrimidine phosphoribosyltransferase family. PyrE subfamily. Homodimer. The cofactor is Mg(2+).

The catalysed reaction is orotidine 5'-phosphate + diphosphate = orotate + 5-phospho-alpha-D-ribose 1-diphosphate. The protein operates within pyrimidine metabolism; UMP biosynthesis via de novo pathway; UMP from orotate: step 1/2. Catalyzes the transfer of a ribosyl phosphate group from 5-phosphoribose 1-diphosphate to orotate, leading to the formation of orotidine monophosphate (OMP). This chain is Orotate phosphoribosyltransferase, found in Cronobacter sakazakii (strain ATCC BAA-894) (Enterobacter sakazakii).